The sequence spans 262 residues: MLPQDTNTDPLPGDDAESASGKSADASQGTPNPGDEVAHPRRIRSFVRRAGRTSTGQQRAMDELGPTYIVPYQPEPLDWTATFGREAPSILEIGFGMGETTAHIAGLRSQDNFLGCEVHEPGVGALLKLIGERGLQNVRIMQHDAVEVAAHMLTENSLDGVHIYFPDPWHKKRHNKRRLVQPPLVKLLASRLKPGGYIHCATDWEEYAHQMVEVLSGEPALENTSKADGGFAERPDYRPVTKFEKRGLRLGHGVWDVVFRKK.

Residues 1 to 58 (MLPQDTNTDPLPGDDAESASGKSADASQGTPNPGDEVAHPRRIRSFVRRAGRTSTGQQ) form a disordered region. The segment covering 40 to 51 (PRRIRSFVRRAG) has biased composition (basic residues). The S-adenosyl-L-methionine site is built by Glu92, Glu117, Asp144, and Asp167. Asp167 is a catalytic residue. A substrate-binding site is contributed by Lys171. The tract at residues 173-178 (RHNKRR) is interaction with RNA. Residues Asp203 and 241 to 244 (TKFE) each bind substrate.

This sequence belongs to the class I-like SAM-binding methyltransferase superfamily. TrmB family.

The enzyme catalyses guanosine(46) in tRNA + S-adenosyl-L-methionine = N(7)-methylguanosine(46) in tRNA + S-adenosyl-L-homocysteine. Its pathway is tRNA modification; N(7)-methylguanine-tRNA biosynthesis. Catalyzes the formation of N(7)-methylguanine at position 46 (m7G46) in tRNA. This Cupriavidus metallidurans (strain ATCC 43123 / DSM 2839 / NBRC 102507 / CH34) (Ralstonia metallidurans) protein is tRNA (guanine-N(7)-)-methyltransferase.